Consider the following 365-residue polypeptide: DNA replication and repair protein RecF (365 aa).

30–37 (GRNAQGKT) is an ATP binding site.

Belongs to the RecF family.

The protein localises to the cytoplasm. Functionally, the RecF protein is involved in DNA metabolism; it is required for DNA replication and normal SOS inducibility. RecF binds preferentially to single-stranded, linear DNA. It also seems to bind ATP. The protein is DNA replication and repair protein RecF of Streptococcus pneumoniae serotype 2 (strain D39 / NCTC 7466).